The chain runs to 340 residues: Adenosine kinase (340 aa).

Residue Asp293 is part of the active site.

The protein belongs to the carbohydrate kinase PfkB family. It depends on Mg(2+) as a cofactor.

It carries out the reaction adenosine + ATP = AMP + ADP + H(+). The protein operates within purine metabolism; AMP biosynthesis via salvage pathway; AMP from adenosine: step 1/1. ATP dependent phosphorylation of adenosine and other related nucleoside analogs to monophosphate derivatives. ADO1 does not play a major role in adenine utilization in yeast. Its physiological role could primarily be to recycle adenosine produced by the methyl cycle. This Saccharomyces cerevisiae (strain ATCC 204508 / S288c) (Baker's yeast) protein is Adenosine kinase.